Reading from the N-terminus, the 1042-residue chain is Isoleucine--tRNA ligase (1042 aa).

Residues 48 to 58 (PFATGLPHFGH) carry the 'HIGH' region motif. The 'KMSKS' region signature appears at 594-598 (KMSKS). An ATP-binding site is contributed by Lys-597.

It belongs to the class-I aminoacyl-tRNA synthetase family. IleS type 2 subfamily. As to quaternary structure, monomer. The cofactor is Zn(2+).

It localises to the cytoplasm. It carries out the reaction tRNA(Ile) + L-isoleucine + ATP = L-isoleucyl-tRNA(Ile) + AMP + diphosphate. In terms of biological role, catalyzes the attachment of isoleucine to tRNA(Ile). As IleRS can inadvertently accommodate and process structurally similar amino acids such as valine, to avoid such errors it has two additional distinct tRNA(Ile)-dependent editing activities. One activity is designated as 'pretransfer' editing and involves the hydrolysis of activated Val-AMP. The other activity is designated 'posttransfer' editing and involves deacylation of mischarged Val-tRNA(Ile). The polypeptide is Isoleucine--tRNA ligase (Borreliella burgdorferi (strain ZS7) (Borrelia burgdorferi)).